The following is a 351-amino-acid chain: F-box protein At1g70590 (351 aa).

Residues 1–60 (MKQRTWPCRSEGSRFSSLSFLKPHDKDKRSRISSINKATAKSTTSSRSSSSSSSSRPPSN) are disordered. Residues 32–41 (ISSINKATAK) are compositionally biased toward polar residues. Residues 42 to 59 (STTSSRSSSSSSSSRPPS) are compositionally biased toward low complexity. One can recognise an F-box domain in the interval 62 to 111 (FGDFSMLPYDILMKIAAPFSHPNLQAASLVCKSWRDALKPLRESMLLIRW). The Sel1-like repeat unit spans residues 105–141 (SMLLIRWGKKYKHGRGGVRANLDKALDSFLKGAMRGS). Residues 142 to 175 (TLAMVDAGLVYWERGEKEKAVNLYRRASELGDAV) form a TPR repeat.

This is F-box protein At1g70590 from Arabidopsis thaliana (Mouse-ear cress).